We begin with the raw amino-acid sequence, 351 residues long: MHQSLTQQRSSDMSLPDSMGAFNRRKRNSIYVTVTLLIVSMLILTVGLAATTRTQNVTVGGYYPGVILGFGSFLGIIGSNLIENKRQMLVASIVFISFGVIAAFCCAIVDGVFAARHIDLKPLYANRCHYVPKTSQREAEEVITSSSKITPSTRALRNLTQAVKEVNCPQLSRGLCTPRIRGNTCFCCDLYNCGNRVEITGGYYEYIDVSSCQDIIHLYHLLWSATILNIVGLFLGIITAAVLGGFKDMNPTLPALNCSVENAHPTVSYYARPQVASYNTYYHSPPHLPPYSAYDFQHSGVFPSSPPSGLSDEQEPQSPSPSPSYMWSSSAPPRYSPPYYPPFEKPPPYSP.

4 consecutive transmembrane segments (helical) span residues 30–50 (IYVT…GLAA), 57–77 (VTVG…LGII), 89–109 (LVAS…CAIV), and 226–246 (TILN…LGGF). The interval 302–331 (FPSSPPSGLSDEQEPQSPSPSPSYMWSSSA) is disordered.

The protein belongs to the TMEM255 family.

The protein resides in the membrane. The chain is Transmembrane protein 255A (Tmem255a) from Mus musculus (Mouse).